The primary structure comprises 245 residues: tRNA (guanine-N(7)-)-methyltransferase (245 aa).

Residues Glu71, Glu96, Asp123, and Asp146 each contribute to the S-adenosyl-L-methionine site. Asp146 is an active-site residue. Lys150 is a binding site for substrate. An interaction with RNA region spans residues 152 to 157 (KHNKRR). Substrate-binding positions include Asp182 and 224–227 (TKFE).

Belongs to the class I-like SAM-binding methyltransferase superfamily. TrmB family.

It carries out the reaction guanosine(46) in tRNA + S-adenosyl-L-methionine = N(7)-methylguanosine(46) in tRNA + S-adenosyl-L-homocysteine. Its pathway is tRNA modification; N(7)-methylguanine-tRNA biosynthesis. Its function is as follows. Catalyzes the formation of N(7)-methylguanine at position 46 (m7G46) in tRNA. This is tRNA (guanine-N(7)-)-methyltransferase from Albidiferax ferrireducens (strain ATCC BAA-621 / DSM 15236 / T118) (Rhodoferax ferrireducens).